We begin with the raw amino-acid sequence, 208 residues long: NAD(P)H dehydrogenase (quinone) (208 aa).

One can recognise a Flavodoxin-like domain in the interval 4 to 199 (VNVIFHSIHG…AMARYQGRHV (196 aa)). Residues 10–15 (SIHGHT) and 87–89 (TRY) contribute to the FMN site. W107 contributes to the substrate binding site. FMN contacts are provided by residues 122-128 (SSGTQHG) and H143.

It belongs to the WrbA family. The cofactor is FMN.

It catalyses the reaction a quinone + NADH + H(+) = a quinol + NAD(+). The enzyme catalyses a quinone + NADPH + H(+) = a quinol + NADP(+). This Methanosarcina barkeri (strain Fusaro / DSM 804) protein is NAD(P)H dehydrogenase (quinone).